Reading from the N-terminus, the 516-residue chain is AMP phosphorylase (516 aa).

AMP is bound by residues G169, 195 to 200, and T204; that span reads SRAITG. Catalysis depends on D257, which acts as the Proton donor. Residues S265 and K289 each contribute to the AMP site.

It belongs to the thymidine/pyrimidine-nucleoside phosphorylase family. Type 2 subfamily.

The enzyme catalyses AMP + phosphate = alpha-D-ribose 1,5-bisphosphate + adenine. It carries out the reaction CMP + phosphate = cytosine + alpha-D-ribose 1,5-bisphosphate. The catalysed reaction is UMP + phosphate = alpha-D-ribose 1,5-bisphosphate + uracil. Functionally, catalyzes the conversion of AMP and phosphate to adenine and ribose 1,5-bisphosphate (R15P). Exhibits phosphorylase activity toward CMP and UMP in addition to AMP. Functions in an archaeal AMP degradation pathway, together with R15P isomerase and RubisCO. This Methanospirillum hungatei JF-1 (strain ATCC 27890 / DSM 864 / NBRC 100397 / JF-1) protein is AMP phosphorylase.